A 44-amino-acid polypeptide reads, in one-letter code: Antimicrobial peptide 2 (44 aa).

Disulfide bonds. In terms of tissue distribution, expressed in flowers but not in leaves, seeds or roots (at protein level).

Its function is as follows. Antimicrobial peptide. Active against fungal species B.cinerea (IC(50)=5.2 uM), A.niger (IC(50)=2.6 uM) and B.sorokinina (IC(50)=5.2 uM) but not against F.oxysporum, F.graminearum and P.debaryanum at concentrations below 10 uM. Inhibits growth of P.infestans at concentration between 1.3 uM and 5.2 uM. Active against bacterial species P.syringae, B.subtilis, X.campestris and C.michiganense. This Taraxacum officinale (Common dandelion) protein is Antimicrobial peptide 2.